Here is a 249-residue protein sequence, read N- to C-terminus: Putative nicotinamide mononucleotide adenylyltransferase (249 aa).

Ser40 and Phe41 together coordinate NAD(+). His48 serves as a coordination point for ATP. Positions 97, 129, 131, 165, and 206 each coordinate NAD(+). 214 to 217 contributes to the ATP binding site; sequence TRAR.

It belongs to the eukaryotic NMN adenylyltransferase family. POF1 subfamily.

It localises to the cytoplasm. The protein resides in the nucleus. The enzyme catalyses beta-nicotinamide D-ribonucleotide + ATP + H(+) = diphosphate + NAD(+). The protein operates within cofactor biosynthesis; NAD(+) biosynthesis; NAD(+) from nicotinamide D-ribonucleotide: step 1/1. Catalyzes the formation of NAD(+) from nicotinamide mononucleotide (NMN) and ATP. Involved in the salvage pathway for NAD(+) biosynthesis via NMN. The polypeptide is Putative nicotinamide mononucleotide adenylyltransferase (Schizosaccharomyces pombe (strain 972 / ATCC 24843) (Fission yeast)).